Here is a 39-residue protein sequence, read N- to C-terminus: Cytochrome b559 subunit beta (39 aa).

The helical transmembrane segment at 14-30 (WLAIHGLAVPTVFSLGS) threads the bilayer. H18 lines the heme pocket.

It belongs to the PsbE/PsbF family. Heterodimer of an alpha subunit and a beta subunit. PSII is composed of 1 copy each of membrane proteins PsbA, PsbB, PsbC, PsbD, PsbE, PsbF, PsbH, PsbI, PsbJ, PsbK, PsbL, PsbM, PsbT, PsbX, PsbY, PsbZ, Psb30/Ycf12, at least 3 peripheral proteins of the oxygen-evolving complex and a large number of cofactors. It forms dimeric complexes. Heme b serves as cofactor.

Its subcellular location is the plastid. The protein localises to the chloroplast thylakoid membrane. This b-type cytochrome is tightly associated with the reaction center of photosystem II (PSII). PSII is a light-driven water:plastoquinone oxidoreductase that uses light energy to abstract electrons from H(2)O, generating O(2) and a proton gradient subsequently used for ATP formation. It consists of a core antenna complex that captures photons, and an electron transfer chain that converts photonic excitation into a charge separation. In Huperzia lucidula (Shining clubmoss), this protein is Cytochrome b559 subunit beta.